The sequence spans 352 residues: Protein NDRG4 (352 aa).

Residues Lys293, Ser298, Ser317, and Ser323 each carry the phosphoserine modification. The tract at residues Ala301–Cys352 is disordered. The segment covering Thr308–Ser323 has biased composition (low complexity). The span at Ser338–Cys352 shows a compositional bias: polar residues.

Belongs to the NDRG family. Predominantly expressed in the brain (at protein level). Detected in neurons of various parts of brain, including the olfactory bulb, olfactory tuberculum, cerebral cortex, striatum, hippocampus, dentate gyrus, thalamus, hypothalamus, mesencephalon, cerebellum, pons and medulla oblongata.

It localises to the cytoplasm. It is found in the cytosol. Its function is as follows. Contributes to the maintenance of intracerebral BDNF levels within the normal range, which is necessary for the preservation of spatial learning and the resistance to neuronal cell death caused by ischemic stress. May enhance growth factor-induced ERK1 and ERK2 phosphorylation. May attenuate NGF-promoted ELK1 phosphorylation in a microtubule-dependent manner. This chain is Protein NDRG4 (Ndrg4), found in Mus musculus (Mouse).